Reading from the N-terminus, the 247-residue chain is ATP synthase subunit a, chloroplastic (247 aa).

5 consecutive transmembrane segments (helical) span residues 38–58 (QVLI…IIAV), 95–115 (VPFI…GALL), 134–154 (INTT…AGLT), 199–219 (LVVV…VMFL), and 220–240 (GLFT…AYIG).

It belongs to the ATPase A chain family. F-type ATPases have 2 components, CF(1) - the catalytic core - and CF(0) - the membrane proton channel. CF(1) has five subunits: alpha(3), beta(3), gamma(1), delta(1), epsilon(1). CF(0) has four main subunits: a, b, b' and c.

It is found in the plastid. It localises to the chloroplast thylakoid membrane. In terms of biological role, key component of the proton channel; it plays a direct role in the translocation of protons across the membrane. The sequence is that of ATP synthase subunit a, chloroplastic from Ranunculus macranthus (Large buttercup).